The chain runs to 218 residues: N-alpha-acetyltransferase 11 (218 aa).

Positions 1-58 (MNIRNARPDDLMNMQHCNLLCLPENYQMKYYFYHGLSWPQLSYIAEDEDGKIVGYVLA) are interaction with NAA15. The 152-residue stretch at 1 to 152 (MNIRNARPDD…DAYAMKRDLS (152 aa)) folds into the N-acetyltransferase domain. A disordered region spans residues 175–218 (EETQGGTLPDAGEACLPKNPTSKDSGSSDSTDVQDSSEDLDSIS). Residues 196-205 (SKDSGSSDST) show a composition bias toward low complexity. The span at 209 to 218 (DSSEDLDSIS) shows a compositional bias: acidic residues.

This sequence belongs to the acetyltransferase family. ARD1 subfamily. Component of the N-terminal acetyltransferase A (NatA) complex composed of NAA11 and NAA15. Interacts with HIF1A.

It localises to the cytoplasm. The protein resides in the nucleus. It carries out the reaction N-terminal glycyl-[protein] + acetyl-CoA = N-terminal N(alpha)-acetylglycyl-[protein] + CoA + H(+). The enzyme catalyses N-terminal L-alanyl-[protein] + acetyl-CoA = N-terminal N(alpha)-acetyl-L-alanyl-[protein] + CoA + H(+). It catalyses the reaction N-terminal L-seryl-[protein] + acetyl-CoA = N-terminal N(alpha)-acetyl-L-seryl-[protein] + CoA + H(+). The catalysed reaction is N-terminal L-valyl-[protein] + acetyl-CoA = N-terminal N(alpha)-acetyl-L-valyl-[protein] + CoA + H(+). It carries out the reaction N-terminal L-cysteinyl-[protein] + acetyl-CoA = N-terminal N(alpha)-acetyl-L-cysteinyl-[protein] + CoA + H(+). The enzyme catalyses N-terminal L-threonyl-[protein] + acetyl-CoA = N-terminal N(alpha)-acetyl-L-threonyl-[protein] + CoA + H(+). Its function is as follows. Displays alpha (N-terminal) acetyltransferase activity. Proposed alternative catalytic subunit of the N-terminal acetyltransferase A (NatA) complex. This is N-alpha-acetyltransferase 11 (Naa11) from Mus musculus (Mouse).